Reading from the N-terminus, the 372-residue chain is Protein RecA (372 aa).

66-73 (GPESSGKT) is an ATP binding site. The segment at 328-359 (GVGVRPEEPTATESGPDAATAESAPAVPAPAT) is disordered. Positions 345–359 (AATAESAPAVPAPAT) are enriched in low complexity.

It belongs to the RecA family.

It is found in the cytoplasm. Functionally, can catalyze the hydrolysis of ATP in the presence of single-stranded DNA, the ATP-dependent uptake of single-stranded DNA by duplex DNA, and the ATP-dependent hybridization of homologous single-stranded DNAs. It interacts with LexA causing its activation and leading to its autocatalytic cleavage. The sequence is that of Protein RecA from Streptomyces ambofaciens.